The following is a 175-amino-acid chain: Gamma-crystallin A (175 aa).

Beta/gamma crystallin 'Greek key' domains are found at residues 2–40 and 41–83; these read GKIT…RVDV and HSWF…RLIP. Positions 84–88 are connecting peptide; it reads QHTGT. Beta/gamma crystallin 'Greek key' domains follow at residues 89 to 129 and 130 to 172; these read FRMR…RVLE and GSWV…RRVM.

It belongs to the beta/gamma-crystallin family.

Its function is as follows. Crystallins are the dominant structural components of the vertebrate eye lens. The sequence is that of Gamma-crystallin A (CRYGA) from Bos taurus (Bovine).